Reading from the N-terminus, the 548-residue chain is Zinc metalloproteinase dpy-31 (548 aa).

The N-terminal stretch at 1-24 is a signal peptide; the sequence is MSLLRSASLLLVVVTAALPPCTLG. Positions 25 to 150 are excised as a propeptide; the sequence is YSLHDGSRLD…KTGQRRVKRK (126 aa). The Peptidase M12A domain maps to 150 to 349; the sequence is KFIGSDLRRW…IRLMNKIYCS (200 aa). A glycan (N-linked (GlcNAc...) asparagine) is linked at Asn-190. Cystine bridges form between Cys-193–Cys-348, Cys-216–Cys-237, Cys-352–Cys-372, Cys-374–Cys-383, and Cys-394–Cys-422. His-245 lines the Zn(2+) pocket. The active site involves Glu-246. Residues His-249 and His-255 each coordinate Zn(2+). An EGF-like domain is found at 344 to 384; the sequence is NKIYCSNVCSRKLPCQRGGYTDPRRCDRCRCPDGFTGQFCE. The CUB domain maps to 394-510; that stretch reads CGGRIQVNSG…RGFEARARAL (117 aa). N-linked (GlcNAc...) asparagine glycosylation is present at Asn-461. A TSP type-1 domain is found at 513-547; it reads NGQWASWTPWTPCTASCGACGSRMRTRVCPHGACP. 3 disulfide bridges follow: Cys-525–Cys-546, Cys-529–Cys-546, and Cys-541–Cys-546.

Requires Zn(2+) as cofactor.

The protein localises to the secreted. Metalloprotease which cleaves the carboxyl terminus of procollagens to mature collagens. Probably involved in cuticular collagen maturation. The chain is Zinc metalloproteinase dpy-31 from Haemonchus contortus (Barber pole worm).